A 604-amino-acid polypeptide reads, in one-letter code: Elongation factor 4 (604 aa).

One can recognise a tr-type G domain in the interval 7 to 189; the sequence is SKIRNFCIIA…SIVHLVPPPS (183 aa). GTP contacts are provided by residues 19-24 and 136-139; these read DHGKST and NKID.

Belongs to the TRAFAC class translation factor GTPase superfamily. Classic translation factor GTPase family. LepA subfamily.

Its subcellular location is the cell inner membrane. It catalyses the reaction GTP + H2O = GDP + phosphate + H(+). In terms of biological role, required for accurate and efficient protein synthesis under certain stress conditions. May act as a fidelity factor of the translation reaction, by catalyzing a one-codon backward translocation of tRNAs on improperly translocated ribosomes. Back-translocation proceeds from a post-translocation (POST) complex to a pre-translocation (PRE) complex, thus giving elongation factor G a second chance to translocate the tRNAs correctly. Binds to ribosomes in a GTP-dependent manner. The sequence is that of Elongation factor 4 from Synechococcus sp. (strain ATCC 27144 / PCC 6301 / SAUG 1402/1) (Anacystis nidulans).